A 399-amino-acid polypeptide reads, in one-letter code: Leu/Ile/Val-binding protein homolog 7 (399 aa).

The N-terminal stretch at 1–22 is a signal peptide; sequence MEKHLIALSVAALQAGAAPASA.

The protein belongs to the leucine-binding protein family.

Functionally, component of an amino-acid transport system. The chain is Leu/Ile/Val-binding protein homolog 7 from Brucella abortus (strain 2308).